The sequence spans 200 residues: Ependymin-related protein 1 (200 aa).

The signal sequence occupies residues 1–17 (MILQAALFLAGLTVVSG). N-linked (GlcNAc...) asparagine glycans are attached at residues Asn-36, Asn-124, and Asn-136.

Belongs to the ependymin family. As to expression, component of the acid-soluble and acid-insoluble organic matrix of prismatic shell layers (at protein level). Expressed discontinuously in the anterior zone of the outer fold of the mantle where its expression correlates with shell pigmentation.

The protein localises to the secreted. This is Ependymin-related protein 1 from Haliotis asinina (Donkey's ear abalone).